We begin with the raw amino-acid sequence, 160 residues long: tRNA (cytidine(34)-2'-O)-methyltransferase (160 aa).

Residues L78, G100, I120, and S128 each contribute to the S-adenosyl-L-methionine site.

It belongs to the class IV-like SAM-binding methyltransferase superfamily. RNA methyltransferase TrmH family. TrmL subfamily. In terms of assembly, homodimer.

The protein resides in the cytoplasm. It carries out the reaction cytidine(34) in tRNA + S-adenosyl-L-methionine = 2'-O-methylcytidine(34) in tRNA + S-adenosyl-L-homocysteine + H(+). It catalyses the reaction 5-carboxymethylaminomethyluridine(34) in tRNA(Leu) + S-adenosyl-L-methionine = 5-carboxymethylaminomethyl-2'-O-methyluridine(34) in tRNA(Leu) + S-adenosyl-L-homocysteine + H(+). In terms of biological role, methylates the ribose at the nucleotide 34 wobble position in the two leucyl isoacceptors tRNA(Leu)(CmAA) and tRNA(Leu)(cmnm5UmAA). Catalyzes the methyl transfer from S-adenosyl-L-methionine to the 2'-OH of the wobble nucleotide. The chain is tRNA (cytidine(34)-2'-O)-methyltransferase from Beijerinckia indica subsp. indica (strain ATCC 9039 / DSM 1715 / NCIMB 8712).